Here is a 153-residue protein sequence, read N- to C-terminus: Suppressor of RNA silencing (153 aa).

Positions 1 to 23 are C-1; the sequence is MMATFSCVCCGTSTTSTYCGKRC. The interaction with TGB1 stretch occupies residues 1 to 85; sequence MMATFSCVCC…IVSRFCGQKH (85 aa). Residues 19–47 form a basic motif (BM) region; it reads CGKRCERKHVYSETRNKRLELYKKYLLEP. The tract at residues 60–85 is C-2; it reads CGMPCSIAEEACDQLPIVSRFCGQKH. Residues 86–127 are interaction with replication protein alpha-A; it reads ADLYDSLLKRSEQELLLEFLQKKMQELKLSHIVKMAKLESEV. A coiled-coil region spans residues 92–132; the sequence is LLKRSEQELLLEFLQKKMQELKLSHIVKMAKLESEVNAIRK. Ser96 is modified (phosphoserine).

This sequence belongs to the virgaviridae suppressor of RNA silencing family. As to quaternary structure, homooligomer. Interacts (via C-terminus) with replication protein alpha-A. Interacts (via N-terminus) with the movement protein TGB1; this interaction targets gammab-TGB1 at the periphery of chloroplasts and plasmodesmata. Interacts with host autophagy protein ATG7; this interaction disrupts the host ATG7-ATG8 interaction to promote viral infection. Interacts (via BM region) with host STY46; this interaction inhibits the viral infection. Post-translationally, phosphorylated at Ser-96 by a host PKA-like kinase; the phosphorylation at this site seems to suppress host cell death. In terms of processing, serine-phosphorylated by host STY46 kinase.

It is found in the host chloroplast envelope. The protein localises to the host endoplasmic reticulum. Its subcellular location is the host cell junction. It localises to the host plasmodesma. Suppressor of RNA-mediated gene silencing, also known as post-transcriptional gene silencing (PTGS), a mechanism of plant viral defense that limits the accumulation of viral RNAs. Promotes viral cell-to-cell long distance movement by enhancing the ATPase activity of TGB1. Enhances RNA helicase activity of replication protein alpha-A. Suppresses autophagy induced by the host as a defense mechanism against viral infection. This chain is Suppressor of RNA silencing, found in Barley stripe mosaic virus (BSMV).